Consider the following 259-residue polypeptide: Translation initiation factor IF-2, chloroplastic (259 aa).

The tr-type G domain occupies 171-259 (LRAPIVAVLG…LLIIAADEGI (89 aa)). 180-187 (GHVNHGKT) contacts GTP.

Belongs to the TRAFAC class translation factor GTPase superfamily. Classic translation factor GTPase family. IF-2 subfamily.

The protein localises to the plastid. It localises to the chloroplast. One of the essential components for the initiation of protein synthesis. Protects formylmethionyl-tRNA from spontaneous hydrolysis and promotes its binding to the 30S ribosomal subunits. Also involved in the hydrolysis of GTP during the formation of the 70S ribosomal complex. This is Translation initiation factor IF-2, chloroplastic (infB) from Galdieria sulphuraria (Red alga).